Here is a 139-residue protein sequence, read N- to C-terminus: Large-conductance mechanosensitive channel (139 aa).

2 helical membrane passes run 9–29 (AFAV…GAAF) and 79–99 (IQTV…VKAI).

The protein belongs to the MscL family. In terms of assembly, homopentamer.

It localises to the cell inner membrane. Its function is as follows. Channel that opens in response to stretch forces in the membrane lipid bilayer. May participate in the regulation of osmotic pressure changes within the cell. The sequence is that of Large-conductance mechanosensitive channel from Pseudomonas putida (strain W619).